We begin with the raw amino-acid sequence, 799 residues long: Probable inorganic carbon transporter subunit DabA (799 aa).

Positions 303, 305, 479, and 494 each coordinate Zn(2+). The disordered stretch occupies residues 574-598 (AGAAAERSEALNGADPDKGVSETAS).

This sequence belongs to the inorganic carbon transporter (TC 9.A.2) DabA family. Forms a complex with DabB. Zn(2+) serves as cofactor.

Its subcellular location is the cell membrane. Functionally, part of an energy-coupled inorganic carbon pump. In Natronomonas pharaonis (strain ATCC 35678 / DSM 2160 / CIP 103997 / JCM 8858 / NBRC 14720 / NCIMB 2260 / Gabara) (Halobacterium pharaonis), this protein is Probable inorganic carbon transporter subunit DabA.